A 373-amino-acid polypeptide reads, in one-letter code: UDP-sugar transporter UST74c (373 aa).

A disordered region spans residues 27–49; the sequence is LEEKMGGSADRSSLLDGSGSKEL. Position 50 is a phosphoserine (S50). The next 8 membrane-spanning stretches (helical) occupy residues 89-111, 131-153, 174-196, 206-225, 238-260, 275-297, 302-324, and 329-351; these read HFPS…LGMG, FPLP…TLSL, ILGL…GALL, MRGY…NGVY, YGLM…YVTG, VFVV…TILC, SALT…GMFI, and VFSW…YTYV.

The protein belongs to the TPT transporter family. SLC35D subfamily.

The protein localises to the golgi apparatus membrane. In terms of biological role, involved in the import of UDP-sugars from the cytoplasm into the Golgi lumen. This Drosophila melanogaster (Fruit fly) protein is UDP-sugar transporter UST74c (frc).